The primary structure comprises 563 residues: DNA polymerase III subunit tau (563 aa).

45–52 contributes to the ATP binding site; that stretch reads GPRGTGKT. 4 residues coordinate Zn(2+): C64, C73, C76, and C79.

The protein belongs to the DnaX/STICHEL family. Component of the DNA clamp loading complex consisting of tau(3):delta(1):delta'(1). The DNA polymerase III holoenzyme complex contains at least 10 different subunits organized into 3 functionally essential subassemblies: the Pol III core, the beta sliding clamp processivity factor and the clamp-loading complex. The Pol III core (subunits alpha, epsilon and theta) contains the polymerase and the 3'-5' exonuclease proofreading activities. The polymerase is tethered to the template via the dimeric beta sliding clamp processivity factor. The DNA clamp-loading complex assembles the beta sliding clamp onto the primed template and plays a central role in the organization and communication at the replication fork. Forms a complex with replicative DNA helicase DnaB (shown with G.stearothermophilus DnaB) tau(3):DnaB(6); a single ATP hydrolysis even is sufficient for complex formation. Colocalizes with DNA helicases PriA, RecQ and RecS.

It localises to the cytoplasm. The protein localises to the nucleoid. It catalyses the reaction DNA(n) + a 2'-deoxyribonucleoside 5'-triphosphate = DNA(n+1) + diphosphate. Functionally, part of the beta sliding clamp loading complex, which hydrolyzes ATP to load the beta clamp onto primed DNA to form the DNA replication pre-initiation complex. DNA polymerase III is a complex, multichain enzyme responsible for most of the replicative DNA synthesis in bacteria. The sequence is that of DNA polymerase III subunit tau from Bacillus subtilis (strain 168).